Reading from the N-terminus, the 451-residue chain is 3-carboxy-cis,cis-muconate cycloisomerase (451 aa).

Belongs to the class-II fumarase/aspartase family.

The catalysed reaction is 2-(carboxymethyl)-5-oxo-2,5-dihydro-2-furoate = 3-carboxy-cis,cis-muconate + H(+). Its function is as follows. Catalyzes an anti cycloisomerization. The sequence is that of 3-carboxy-cis,cis-muconate cycloisomerase (pcaB) from Bradyrhizobium diazoefficiens (strain JCM 10833 / BCRC 13528 / IAM 13628 / NBRC 14792 / USDA 110).